Here is a 529-residue protein sequence, read N- to C-terminus: Ribonuclease Y (529 aa).

Residues 4 to 24 (GLIYISLEVLVACLITALVMY) traverse the membrane as a helical segment. The region spanning 216 to 297 (LTTRIALPCS…NRIEEVYHRV (82 aa)) is the KH domain. In terms of domain architecture, HD spans 342–435 (ALQHSKEVAL…VCAADALSAG (94 aa)).

The protein belongs to the RNase Y family.

It is found in the cell membrane. Endoribonuclease that initiates mRNA decay. This Helicobacter pylori (strain ATCC 700392 / 26695) (Campylobacter pylori) protein is Ribonuclease Y.